The sequence spans 1002 residues: Isoleucine--tRNA ligase, mitochondrial (1002 aa).

The 'HIGH' region motif lies at 94–104 (PYANGELHLGH). The 'KMSKS' region signature appears at 668 to 672 (KMSKS). Residue Lys671 participates in ATP binding.

The protein belongs to the class-I aminoacyl-tRNA synthetase family.

Its subcellular location is the mitochondrion matrix. It catalyses the reaction tRNA(Ile) + L-isoleucine + ATP = L-isoleucyl-tRNA(Ile) + AMP + diphosphate. This Saccharomyces cerevisiae (strain ATCC 204508 / S288c) (Baker's yeast) protein is Isoleucine--tRNA ligase, mitochondrial (ISM1).